The following is a 546-amino-acid chain: Membrane protein insertase YidC (546 aa).

A helical membrane pass occupies residues 6–26 (LILFIVFSFSLLLLWEAWQDK). A disordered region spans residues 31–56 (PATRPVAGAPAGSAAPTPSTALNAPA). The segment covering 37-56 (AGAPAGSAAPTPSTALNAPA) has biased composition (low complexity). Helical transmembrane passes span 351–371 (LVGN…LALY), 425–445 (LPIL…LAAV), 465–482 (WYIL…QVKL), and 494–514 (IMMI…AGLV).

It belongs to the OXA1/ALB3/YidC family. Type 1 subfamily. Interacts with the Sec translocase complex via SecD. Specifically interacts with transmembrane segments of nascent integral membrane proteins during membrane integration.

The protein resides in the cell inner membrane. Functionally, required for the insertion and/or proper folding and/or complex formation of integral membrane proteins into the membrane. Involved in integration of membrane proteins that insert both dependently and independently of the Sec translocase complex, as well as at least some lipoproteins. Aids folding of multispanning membrane proteins. In Thiobacillus denitrificans (strain ATCC 25259 / T1), this protein is Membrane protein insertase YidC.